Here is a 124-residue protein sequence, read N- to C-terminus: Small ribosomal subunit protein bS6 (124 aa).

A disordered region spans residues 96–124 (ETGPSPMMKEVQREEAKKAAAAQPTEAQA). Over residues 114–124 (AAAAQPTEAQA) the composition is skewed to low complexity.

It belongs to the bacterial ribosomal protein bS6 family.

In terms of biological role, binds together with bS18 to 16S ribosomal RNA. The protein is Small ribosomal subunit protein bS6 of Burkholderia vietnamiensis (strain G4 / LMG 22486) (Burkholderia cepacia (strain R1808)).